We begin with the raw amino-acid sequence, 512 residues long: ATP synthase subunit beta 2 (512 aa).

174-181 (GGAGVGKT) contacts ATP. Residues 479 to 494 (RRKEEAAREADARRDA) show a composition bias toward basic and acidic residues. Residues 479–512 (RRKEEAAREADARRDAAAGAASGSAGPQGAQHGR) form a disordered region.

This sequence belongs to the ATPase alpha/beta chains family. F-type ATPases have 2 components, CF(1) - the catalytic core - and CF(0) - the membrane proton channel. CF(1) has five subunits: alpha(3), beta(3), gamma(1), delta(1), epsilon(1). CF(0) has three main subunits: a(1), b(2) and c(9-12). The alpha and beta chains form an alternating ring which encloses part of the gamma chain. CF(1) is attached to CF(0) by a central stalk formed by the gamma and epsilon chains, while a peripheral stalk is formed by the delta and b chains.

It is found in the cell inner membrane. The catalysed reaction is ATP + H2O + 4 H(+)(in) = ADP + phosphate + 5 H(+)(out). Produces ATP from ADP in the presence of a proton gradient across the membrane. The catalytic sites are hosted primarily by the beta subunits. This chain is ATP synthase subunit beta 2, found in Burkholderia thailandensis (strain ATCC 700388 / DSM 13276 / CCUG 48851 / CIP 106301 / E264).